The sequence spans 252 residues: Imidazole glycerol phosphate synthase subunit HisF (252 aa).

Residues Asp13 and Asp132 contribute to the active site.

This sequence belongs to the HisA/HisF family. Heterodimer of HisH and HisF.

The protein resides in the cytoplasm. The catalysed reaction is 5-[(5-phospho-1-deoxy-D-ribulos-1-ylimino)methylamino]-1-(5-phospho-beta-D-ribosyl)imidazole-4-carboxamide + L-glutamine = D-erythro-1-(imidazol-4-yl)glycerol 3-phosphate + 5-amino-1-(5-phospho-beta-D-ribosyl)imidazole-4-carboxamide + L-glutamate + H(+). It participates in amino-acid biosynthesis; L-histidine biosynthesis; L-histidine from 5-phospho-alpha-D-ribose 1-diphosphate: step 5/9. In terms of biological role, IGPS catalyzes the conversion of PRFAR and glutamine to IGP, AICAR and glutamate. The HisF subunit catalyzes the cyclization activity that produces IGP and AICAR from PRFAR using the ammonia provided by the HisH subunit. The chain is Imidazole glycerol phosphate synthase subunit HisF from Campylobacter fetus subsp. fetus (strain 82-40).